Consider the following 237-residue polypeptide: 1-(5-phosphoribosyl)-5-[(5-phosphoribosylamino)methylideneamino] imidazole-4-carboxamide isomerase (237 aa).

Residue D8 is the Proton acceptor of the active site. Residue D127 is the Proton donor of the active site.

The protein belongs to the HisA/HisF family.

It is found in the cytoplasm. The catalysed reaction is 1-(5-phospho-beta-D-ribosyl)-5-[(5-phospho-beta-D-ribosylamino)methylideneamino]imidazole-4-carboxamide = 5-[(5-phospho-1-deoxy-D-ribulos-1-ylimino)methylamino]-1-(5-phospho-beta-D-ribosyl)imidazole-4-carboxamide. It functions in the pathway amino-acid biosynthesis; L-histidine biosynthesis; L-histidine from 5-phospho-alpha-D-ribose 1-diphosphate: step 4/9. This is 1-(5-phosphoribosyl)-5-[(5-phosphoribosylamino)methylideneamino] imidazole-4-carboxamide isomerase from Sulfurovum sp. (strain NBC37-1).